The chain runs to 130 residues: DNA-directed RNA polymerase subunit omega (130 aa).

A disordered region spans residues 107–130 (SLDVSQESHDDEIDDQDSGEEVPI). Over residues 115–130 (HDDEIDDQDSGEEVPI) the composition is skewed to acidic residues.

Belongs to the RNA polymerase subunit omega family. In terms of assembly, the RNAP catalytic core consists of 2 alpha, 1 beta, 1 beta' and 1 omega subunit. When a sigma factor is associated with the core the holoenzyme is formed, which can initiate transcription.

The enzyme catalyses RNA(n) + a ribonucleoside 5'-triphosphate = RNA(n+1) + diphosphate. Promotes RNA polymerase assembly. Latches the N- and C-terminal regions of the beta' subunit thereby facilitating its interaction with the beta and alpha subunits. This is DNA-directed RNA polymerase subunit omega from Wolbachia pipientis subsp. Culex pipiens (strain wPip).